Reading from the N-terminus, the 350-residue chain is Phenylalanine--tRNA ligase alpha subunit (350 aa).

Glutamate 271 contacts Mg(2+).

Belongs to the class-II aminoacyl-tRNA synthetase family. Phe-tRNA synthetase alpha subunit type 1 subfamily. Tetramer of two alpha and two beta subunits. Requires Mg(2+) as cofactor.

The protein localises to the cytoplasm. It catalyses the reaction tRNA(Phe) + L-phenylalanine + ATP = L-phenylalanyl-tRNA(Phe) + AMP + diphosphate + H(+). This chain is Phenylalanine--tRNA ligase alpha subunit, found in Paracidovorax citrulli (strain AAC00-1) (Acidovorax citrulli).